We begin with the raw amino-acid sequence, 265 residues long: 3-methyl-2-oxobutanoate hydroxymethyltransferase (265 aa).

Residues aspartate 45 and aspartate 84 each coordinate Mg(2+). 3-methyl-2-oxobutanoate is bound by residues 45-46 (DS), aspartate 84, and lysine 112. Glutamate 114 lines the Mg(2+) pocket. The active-site Proton acceptor is the glutamate 181.

The protein belongs to the PanB family. As to quaternary structure, homodecamer; pentamer of dimers. Mg(2+) serves as cofactor.

It localises to the cytoplasm. It catalyses the reaction 3-methyl-2-oxobutanoate + (6R)-5,10-methylene-5,6,7,8-tetrahydrofolate + H2O = 2-dehydropantoate + (6S)-5,6,7,8-tetrahydrofolate. The protein operates within cofactor biosynthesis; (R)-pantothenate biosynthesis; (R)-pantoate from 3-methyl-2-oxobutanoate: step 1/2. Catalyzes the reversible reaction in which hydroxymethyl group from 5,10-methylenetetrahydrofolate is transferred onto alpha-ketoisovalerate to form ketopantoate. This is 3-methyl-2-oxobutanoate hydroxymethyltransferase from Yersinia pestis bv. Antiqua (strain Antiqua).